A 2472-amino-acid polypeptide reads, in one-letter code: Highly reducing polyketide synthase xilA (2472 aa).

The Ketosynthase family 3 (KS3) domain maps to 1-417; that stretch reads MPGGVRDLPA…GTNGHCIIDD (417 aa). Catalysis depends on for beta-ketoacyl synthase activity residues C162, H298, and H340. Residues 442–502 are disordered; it reads NDINGKSGTN…QRKHHHPKTD (61 aa). The segment covering 450–489 has biased composition (low complexity); sequence TNGANGANRVNGVNGVNGVNGVNGANGHSNASLLSNGSNN. The region spanning 597-932 is the Malonyl-CoA:ACP transacylase (MAT) domain; that stretch reads FIFTGQGAQW…CTGTLFVHNV (336 aa). Positions 991–1129 are N-terminal hotdog fold; it reads HDLLGSKVPG…GQIKVEVAKF (139 aa). Residues 991-1294 enclose the PKS/mFAS DH domain; the sequence is HDLLGSKVPG…FTSLNNEQES (304 aa). H1023 (proton acceptor; for dehydratase activity) is an active-site residue. The C-terminal hotdog fold stretch occupies residues 1141-1294; it reads GRLVDAQTWY…FTSLNNEQES (154 aa). The active-site Proton donor; for dehydratase activity is the D1207. Residues 1289–1505 form a methyltransferase (CMeT) domain region; it reads NNEQESPSTG…IITVHALRSI (217 aa). The Enoyl reductase (ER) domain occupies 1724-2036; the sequence is GLLTSLYFKP…KGTHIGKMVI (313 aa). The Ketoreductase (KR) domain maps to 2060–2239; sequence ASYILVGGLS…ATTVSLGFIK (180 aa). One can recognise a Carrier domain in the interval 2391–2469; that stretch reads ETVKLVSDAI…SIARVIVEEA (79 aa). S2428 is modified (O-(pantetheine 4'-phosphoryl)serine).

Pantetheine 4'-phosphate serves as cofactor.

It functions in the pathway secondary metabolite biosynthesis. Highly reducing polyketide synthase; part of the gene cluster that mediates the biosynthesis of the 6-methyl-2-pyrone derivative xylariolide D. XilA produces the 5-alkyl-6-methyl-2-pyrone backbone called prexylariolide D via sequential condensations of 4 malonyl-CoA units with one acetyl-CoA starter unit. During the biosynthesis, the linear polyketide chain is branched by the addition of an acetyl unit as the origin of the methyl group at the 2-pyrone ring. Prexylariolide D is then hydroxylated at the side chain by xilC to form the final product, xylariolide D. The sequence is that of Highly reducing polyketide synthase xilA from Penicillium crustosum (Blue mold fungus).